Consider the following 392-residue polypeptide: 23S rRNA (uracil(747)-C(5))-methyltransferase RlmC (392 aa).

[4Fe-4S] cluster contacts are provided by Cys4, Cys12, Cys15, and Cys93. Residues Gln218, Phe247, Glu275, and Asn321 each coordinate S-adenosyl-L-methionine. Cys348 serves as the catalytic Nucleophile.

Belongs to the class I-like SAM-binding methyltransferase superfamily. RNA M5U methyltransferase family. RlmC subfamily.

It catalyses the reaction uridine(747) in 23S rRNA + S-adenosyl-L-methionine = 5-methyluridine(747) in 23S rRNA + S-adenosyl-L-homocysteine + H(+). Catalyzes the formation of 5-methyl-uridine at position 747 (m5U747) in 23S rRNA. This chain is 23S rRNA (uracil(747)-C(5))-methyltransferase RlmC, found in Haemophilus influenzae (strain PittEE).